Consider the following 87-residue polypeptide: Small ribosomal subunit protein uS15 (87 aa).

This sequence belongs to the universal ribosomal protein uS15 family. As to quaternary structure, part of the 30S ribosomal subunit. Forms a bridge to the 50S subunit in the 70S ribosome, contacting the 23S rRNA.

In terms of biological role, one of the primary rRNA binding proteins, it binds directly to 16S rRNA where it helps nucleate assembly of the platform of the 30S subunit by binding and bridging several RNA helices of the 16S rRNA. Its function is as follows. Forms an intersubunit bridge (bridge B4) with the 23S rRNA of the 50S subunit in the ribosome. The chain is Small ribosomal subunit protein uS15 from Clostridium perfringens (strain ATCC 13124 / DSM 756 / JCM 1290 / NCIMB 6125 / NCTC 8237 / Type A).